The following is a 328-amino-acid chain: Aspartate carbamoyltransferase catalytic subunit (328 aa).

Residues arginine 70 and threonine 71 each contribute to the carbamoyl phosphate site. Residue lysine 98 participates in L-aspartate binding. Residues arginine 120, histidine 150, and glutamine 153 each coordinate carbamoyl phosphate. The L-aspartate site is built by arginine 183 and arginine 238. 2 residues coordinate carbamoyl phosphate: glycine 279 and proline 280.

It belongs to the aspartate/ornithine carbamoyltransferase superfamily. ATCase family. In terms of assembly, heterododecamer (2C3:3R2) of six catalytic PyrB chains organized as two trimers (C3), and six regulatory PyrI chains organized as three dimers (R2).

It carries out the reaction carbamoyl phosphate + L-aspartate = N-carbamoyl-L-aspartate + phosphate + H(+). The protein operates within pyrimidine metabolism; UMP biosynthesis via de novo pathway; (S)-dihydroorotate from bicarbonate: step 2/3. In terms of biological role, catalyzes the condensation of carbamoyl phosphate and aspartate to form carbamoyl aspartate and inorganic phosphate, the committed step in the de novo pyrimidine nucleotide biosynthesis pathway. The polypeptide is Aspartate carbamoyltransferase catalytic subunit (Methylococcus capsulatus (strain ATCC 33009 / NCIMB 11132 / Bath)).